The chain runs to 220 residues: Ras-related protein Rab-3A (220 aa).

Residues Ser-31, Ser-32, Val-33, Gly-34, Lys-35, Thr-36, Ser-37, Thr-48, Pro-49, Ser-53, and Thr-54 each coordinate GTP. Thr-36 provides a ligand contact to Mg(2+). Positions Pro-49–Asp-58 match the Switch 1 motif. 2 residues coordinate Mg(2+): Thr-54 and Asp-77. Gly-80 provides a ligand contact to GTP. Residues Gly-80–Met-96 carry the Switch 2 motif. Thr-86 carries the post-translational modification Phosphothreonine; by LRRK2. GTP contacts are provided by Asn-135, Lys-136, Asp-138, Ala-166, and Lys-167. A phosphoserine mark is found at Ser-188 and Ser-190. Positions Ala-194 to Cys-220 are disordered. S-geranylgeranyl cysteine attachment occurs at residues Cys-218 and Cys-220. A Cysteine methyl ester modification is found at Cys-220.

This sequence belongs to the small GTPase superfamily. Rab family. In terms of assembly, interacts with RIMS1 and RIMS2. Interacts with Rabphilin-3A/RPH3A and Rab effector Noc2/RPH3AL. Interacts with SYTL4. Interacts with RAB3IP. Interacts with SGSM1 and SGSM3. Interacts with SYT1. Interacts with MYH9; this interaction is essential for lysosome exocytosis and plasma membrane repair. Interacts with STXBP1; this interaction promotes RAB3A dissociation from the vesicle membrane. Interacts with SNCA. The GTP-bound form interacts with REP15. Interacts with GDI1, GDI2, CHM and CHML; phosphorylation at Thr-86 disrupts these interactions. Interacts with MADD (via uDENN domain); the GTP-bound form is preferred for interaction. Requires Mg(2+) as cofactor. Phosphorylation of Thr-86 in the switch II region by LRRK2 prevents the association of RAB regulatory proteins, including CHM, CHML and RAB GDP dissociation inhibitors GDI1 and GDI2. As to expression, specifically expressed in brain.

It localises to the cytoplasm. The protein localises to the cytosol. It is found in the lysosome. The protein resides in the cytoplasmic vesicle. Its subcellular location is the secretory vesicle. It localises to the cell projection. The protein localises to the axon. It is found in the cell membrane. The protein resides in the presynapse. Its subcellular location is the postsynapse. It catalyses the reaction GTP + H2O = GDP + phosphate + H(+). Its activity is regulated as follows. Regulated by guanine nucleotide exchange factors (GEFs) including RAB3IL1 and MADD which promote the exchange of bound GDP for free GTP. Regulated by GTPase activating proteins (GAPs) including RAB3GAP1 and TBC1D10B which increase the GTP hydrolysis activity. Inhibited by GDP dissociation inhibitors (GDIs) which prevent Rab-GDP dissociation. Functionally, the small GTPases Rab are key regulators of intracellular membrane trafficking, from the formation of transport vesicles to their fusion with membranes. Rabs cycle between an inactive GDP-bound form and an active GTP-bound form that is able to recruit to membranes different sets of downstream effectors directly responsible for vesicle formation, movement, tethering and fusion. RAB3A plays a central role in regulated exocytosis and secretion. Controls the recruitment, tethering and docking of secretory vesicles to the plasma membrane. Upon stimulation, switches to its active GTP-bound form, cycles to vesicles and recruits effectors such as RIMS1, RIMS2, Rabphilin-3A/RPH3A, RPH3AL or SYTL4 to help the docking of vesicules onto the plasma membrane. Upon GTP hydrolysis by GTPase-activating protein, dissociates from the vesicle membrane allowing the exocytosis to proceed. Stimulates insulin secretion through interaction with RIMS2 or RPH3AL effectors in pancreatic beta cells. Regulates calcium-dependent lysosome exocytosis and plasma membrane repair (PMR) via the interaction with 2 effectors, SYTL4 and myosin-9/MYH9. Acts as a positive regulator of acrosome content secretion in sperm cells by interacting with RIMS1. Also plays a role in the regulation of dopamine release by interacting with synaptotagmin I/SYT. The chain is Ras-related protein Rab-3A from Homo sapiens (Human).